Reading from the N-terminus, the 211-residue chain is MRVRKRKGAQEHLENNPHYVILEPEAAKGRWCEVFGNDHPIHIEVGSGKGAFITGMALKNPEINYIGIDIQLSVLSYALDKVLASQAPNVRLLRVDGSSLTNYFDAGEVDMMYLNFSDPWPKSRHEKRRLTYKSFLDTYKQILPENGEIHFKTDNRGLFEYSLASFSQYGMTLKQVWLDLHASDYQGNVMTEYEARFAKKGQIIYRLEATF.

Glu44, Asp69, Asp96, and Asp118 together coordinate S-adenosyl-L-methionine. The active site involves Asp118. Lys122 is a binding site for substrate. The tract at residues 124–129 is interaction with RNA; it reads RHEKRR. Substrate contacts are provided by residues Asp154 and 191 to 194; that span reads TEYE.

This sequence belongs to the class I-like SAM-binding methyltransferase superfamily. TrmB family.

The enzyme catalyses guanosine(46) in tRNA + S-adenosyl-L-methionine = N(7)-methylguanosine(46) in tRNA + S-adenosyl-L-homocysteine. It functions in the pathway tRNA modification; N(7)-methylguanine-tRNA biosynthesis. Functionally, catalyzes the formation of N(7)-methylguanine at position 46 (m7G46) in tRNA. This is tRNA (guanine-N(7)-)-methyltransferase from Streptococcus equi subsp. equi (strain 4047).